The primary structure comprises 85 residues: Large ribosomal subunit protein bL27 (85 aa).

Residues 1–21 (MAHKKGGGSTKNGRDSNPKYL) form a disordered region.

The protein belongs to the bacterial ribosomal protein bL27 family.

The sequence is that of Large ribosomal subunit protein bL27 from Chlorobium chlorochromatii (strain CaD3).